We begin with the raw amino-acid sequence, 472 residues long: ATP synthase subunit beta (472 aa).

157 to 164 (GGAGVGKT) is an ATP binding site.

It belongs to the ATPase alpha/beta chains family. F-type ATPases have 2 components, CF(1) - the catalytic core - and CF(0) - the membrane proton channel. CF(1) has five subunits: alpha(3), beta(3), gamma(1), delta(1), epsilon(1). CF(0) has three main subunits: a(1), b(2) and c(9-12). The alpha and beta chains form an alternating ring which encloses part of the gamma chain. CF(1) is attached to CF(0) by a central stalk formed by the gamma and epsilon chains, while a peripheral stalk is formed by the delta and b chains.

The protein localises to the cell membrane. It carries out the reaction ATP + H2O + 4 H(+)(in) = ADP + phosphate + 5 H(+)(out). Produces ATP from ADP in the presence of a proton gradient across the membrane. The catalytic sites are hosted primarily by the beta subunits. The chain is ATP synthase subunit beta from Desulforamulus reducens (strain ATCC BAA-1160 / DSM 100696 / MI-1) (Desulfotomaculum reducens).